The following is a 188-amino-acid chain: Holliday junction branch migration complex subunit RuvA (188 aa).

Positions M1–S64 are domain I. The interval N65–Y143 is domain II. A region of interest (flexible linker) is located at residue Y143. The segment at Y143–S186 is domain III.

This sequence belongs to the RuvA family. As to quaternary structure, homotetramer. Forms an RuvA(8)-RuvB(12)-Holliday junction (HJ) complex. HJ DNA is sandwiched between 2 RuvA tetramers; dsDNA enters through RuvA and exits via RuvB. An RuvB hexamer assembles on each DNA strand where it exits the tetramer. Each RuvB hexamer is contacted by two RuvA subunits (via domain III) on 2 adjacent RuvB subunits; this complex drives branch migration. In the full resolvosome a probable DNA-RuvA(4)-RuvB(12)-RuvC(2) complex forms which resolves the HJ.

It is found in the cytoplasm. In terms of biological role, the RuvA-RuvB-RuvC complex processes Holliday junction (HJ) DNA during genetic recombination and DNA repair, while the RuvA-RuvB complex plays an important role in the rescue of blocked DNA replication forks via replication fork reversal (RFR). RuvA specifically binds to HJ cruciform DNA, conferring on it an open structure. The RuvB hexamer acts as an ATP-dependent pump, pulling dsDNA into and through the RuvAB complex. HJ branch migration allows RuvC to scan DNA until it finds its consensus sequence, where it cleaves and resolves the cruciform DNA. Promotes Holliday junction (HJ) branch migration in conjunction with RuvB. This chain is Holliday junction branch migration complex subunit RuvA, found in Thermotoga maritima (strain ATCC 43589 / DSM 3109 / JCM 10099 / NBRC 100826 / MSB8).